Reading from the N-terminus, the 284-residue chain is Rubber cis-polyprenyltransferase HRT2 (284 aa).

Residue D41 is part of the active site.

The protein belongs to the UPP synthase family. As to expression, predominantly expressed in latex.

The enzyme catalyses (cis-prenyl)(n)-diphosphate + isopentenyl diphosphate = (cis-prenyl)(n+1)-diphosphate + diphosphate. Proposed to be involved in rubber biosynthesis as a particle-bound rubber transferase responsible for the cis-1,4-polymerization of isoprene subunits. Probably requires additional factors for the production of high molecular mass rubber. The protein is Rubber cis-polyprenyltransferase HRT2 (HRT2) of Hevea brasiliensis (Para rubber tree).